Reading from the N-terminus, the 396-residue chain is Putative pyridoxal phosphate-dependent acyltransferase (396 aa).

111 to 112 (GF) serves as a coordination point for pyridoxal 5'-phosphate. H136 contacts substrate. Pyridoxal 5'-phosphate contacts are provided by residues S186, 211 to 214 (DDAH), and 241 to 244 (TLSK). K244 is modified (N6-(pyridoxal phosphate)lysine). Residue T358 coordinates substrate.

This sequence belongs to the class-II pyridoxal-phosphate-dependent aminotransferase family. Homodimer. Pyridoxal 5'-phosphate serves as cofactor.

This Bacillus anthracis protein is Putative pyridoxal phosphate-dependent acyltransferase.